A 204-amino-acid polypeptide reads, in one-letter code: Thymidine kinase (204 aa).

ATP-binding positions include 15–22 (GSMFSGKS) and 88–91 (DEVQ). The active-site Proton acceptor is the Glu-89. The Zn(2+) site is built by Cys-145, Cys-148, Cys-183, and Cys-186.

This sequence belongs to the thymidine kinase family. In terms of assembly, homotetramer.

The protein localises to the cytoplasm. It carries out the reaction thymidine + ATP = dTMP + ADP + H(+). This chain is Thymidine kinase, found in Halalkalibacterium halodurans (strain ATCC BAA-125 / DSM 18197 / FERM 7344 / JCM 9153 / C-125) (Bacillus halodurans).